Here is a 371-residue protein sequence, read N- to C-terminus: 4-hydroxy-3-methylbut-2-en-1-yl diphosphate synthase (flavodoxin) (371 aa).

[4Fe-4S] cluster contacts are provided by cysteine 270, cysteine 273, cysteine 305, and glutamate 312.

Belongs to the IspG family. [4Fe-4S] cluster serves as cofactor.

The enzyme catalyses (2E)-4-hydroxy-3-methylbut-2-enyl diphosphate + oxidized [flavodoxin] + H2O + 2 H(+) = 2-C-methyl-D-erythritol 2,4-cyclic diphosphate + reduced [flavodoxin]. It participates in isoprenoid biosynthesis; isopentenyl diphosphate biosynthesis via DXP pathway; isopentenyl diphosphate from 1-deoxy-D-xylulose 5-phosphate: step 5/6. Its function is as follows. Converts 2C-methyl-D-erythritol 2,4-cyclodiphosphate (ME-2,4cPP) into 1-hydroxy-2-methyl-2-(E)-butenyl 4-diphosphate. In Shewanella sediminis (strain HAW-EB3), this protein is 4-hydroxy-3-methylbut-2-en-1-yl diphosphate synthase (flavodoxin).